A 159-amino-acid polypeptide reads, in one-letter code: Putative 4-hydroxy-4-methyl-2-oxoglutarate aldolase (159 aa).

Substrate contacts are provided by residues 78-81 and Arg100; that span reads GDVI. Residue Asp101 coordinates a divalent metal cation.

This sequence belongs to the class II aldolase/RraA-like family. In terms of assembly, homotrimer. A divalent metal cation is required as a cofactor.

The catalysed reaction is 4-hydroxy-4-methyl-2-oxoglutarate = 2 pyruvate. It carries out the reaction oxaloacetate + H(+) = pyruvate + CO2. In terms of biological role, catalyzes the aldol cleavage of 4-hydroxy-4-methyl-2-oxoglutarate (HMG) into 2 molecules of pyruvate. Also contains a secondary oxaloacetate (OAA) decarboxylase activity due to the common pyruvate enolate transition state formed following C-C bond cleavage in the retro-aldol and decarboxylation reactions. The sequence is that of Putative 4-hydroxy-4-methyl-2-oxoglutarate aldolase from Mycobacterium sp. (strain JLS).